We begin with the raw amino-acid sequence, 270 residues long: Ethanolamine ammonia-lyase small subunit (270 aa).

Adenosylcob(III)alamin-binding residues include V161, E182, and C211.

The protein belongs to the EutC family. As to quaternary structure, the basic unit is a heterodimer which dimerizes to form tetramers. The heterotetramers trimerize; 6 large subunits form a core ring with 6 small subunits projecting outwards. Adenosylcob(III)alamin serves as cofactor.

The protein localises to the bacterial microcompartment. The catalysed reaction is ethanolamine = acetaldehyde + NH4(+). It participates in amine and polyamine degradation; ethanolamine degradation. Its function is as follows. Catalyzes the deamination of various vicinal amino-alcohols to oxo compounds. Allows this organism to utilize ethanolamine as the sole source of nitrogen and carbon in the presence of external vitamin B12. The polypeptide is Ethanolamine ammonia-lyase small subunit (Azotobacter vinelandii (strain DJ / ATCC BAA-1303)).